A 282-amino-acid polypeptide reads, in one-letter code: Orotidine 5'-phosphate decarboxylase (282 aa).

Lys95 serves as the catalytic Proton donor.

This sequence belongs to the OMP decarboxylase family. Type 2 subfamily.

It catalyses the reaction orotidine 5'-phosphate + H(+) = UMP + CO2. Its pathway is pyrimidine metabolism; UMP biosynthesis via de novo pathway; UMP from orotate: step 2/2. The chain is Orotidine 5'-phosphate decarboxylase from Polaromonas naphthalenivorans (strain CJ2).